The following is a 51-amino-acid chain: Sperm protamine P1 (51 aa).

Disulfide bonds link Cys7–Cys15 and Cys38–Cys48.

Belongs to the protamine P1 family. In terms of assembly, cross-linked by interchain disulfide bonds around the DNA-helix. Post-translationally, phosphorylated by SRPK1. In terms of tissue distribution, testis.

It is found in the nucleus. The protein resides in the chromosome. Protamines substitute for histones in the chromatin of sperm during the haploid phase of spermatogenesis. They compact sperm DNA into a highly condensed, stable and inactive complex. This is Sperm protamine P1 (Prm1) from Rattus norvegicus (Rat).